We begin with the raw amino-acid sequence, 122 residues long: T-cell receptor beta chain V region C5 (122 aa).

A signal peptide spans 1–7 (ILLCAKH). Positions 8–103 (MEAAVTQSPR…TAVYFCASSG (96 aa)) are v segment. A disulfide bridge connects residues Cys-31 and Cys-99. Positions 104–108 (TGGAL) are d segment. The segment at 109 to 122 (DTQYFGPGTRLLVL) is j segment.

The protein is T-cell receptor beta chain V region C5 of Mus musculus (Mouse).